We begin with the raw amino-acid sequence, 229 residues long: MDFLRDVLQEYGVRFEESQIEKTFRYLNELLNSPHNLTALRSLDSAVHKNVAEILIPLKHENLRGSLLDVGSGNGVPGLILAIFFPELKVTLLDSKEKAVQFLEHVVRKLNLENAAVVKERAENFSREHREEYDYATARAVARLNTLVEICAPAVRIGGKLLFYKGPSFEEELKEARKALDELKVELEEVRRYTLKTGEQRCLLVLRKTDRSPEKYPRRVGIPFKRPLL.

S-adenosyl-L-methionine is bound by residues G71, 122–123 (AE), and R139.

The protein belongs to the methyltransferase superfamily. RNA methyltransferase RsmG family.

It localises to the cytoplasm. Specifically methylates the N7 position of a guanine in 16S rRNA. The polypeptide is Ribosomal RNA small subunit methyltransferase G (Thermotoga neapolitana (strain ATCC 49049 / DSM 4359 / NBRC 107923 / NS-E)).